Here is a 526-residue protein sequence, read N- to C-terminus: Peptide chain release factor 3 (526 aa).

One can recognise a tr-type G domain in the interval 8–277 (NKRRTFAIIS…GLTQWAPAPQ (270 aa)). GTP-binding positions include 17-24 (SHPDAGKT), 85-89 (DTPGH), and 139-142 (NKLD).

This sequence belongs to the TRAFAC class translation factor GTPase superfamily. Classic translation factor GTPase family. PrfC subfamily.

The protein resides in the cytoplasm. Its function is as follows. Increases the formation of ribosomal termination complexes and stimulates activities of RF-1 and RF-2. It binds guanine nucleotides and has strong preference for UGA stop codons. It may interact directly with the ribosome. The stimulation of RF-1 and RF-2 is significantly reduced by GTP and GDP, but not by GMP. This chain is Peptide chain release factor 3, found in Histophilus somni (strain 129Pt) (Haemophilus somnus).